Reading from the N-terminus, the 152-residue chain is Small ribosomal subunit protein uS19 (152 aa).

It belongs to the universal ribosomal protein uS19 family.

Functionally, protein S19 forms a complex with S13 that binds strongly to the 16S ribosomal RNA. This Methanocaldococcus jannaschii (strain ATCC 43067 / DSM 2661 / JAL-1 / JCM 10045 / NBRC 100440) (Methanococcus jannaschii) protein is Small ribosomal subunit protein uS19 (rps19).